A 365-amino-acid polypeptide reads, in one-letter code: Probable tRNA pseudouridine synthase B (365 aa).

The active-site Nucleophile is Asp-43. Residues 209–285 (YPKIVVKRSA…DHIFLEADDG (77 aa)) enclose the PUA domain. Residues 300-365 (SGSGLHKDIQ…GKERHGRDHQ (66 aa)) are disordered. 3 stretches are compositionally biased toward basic and acidic residues: residues 304-318 (LHKD…KDTR), 326-336 (TGPEKTADRVW), and 354-365 (GGGKERHGRDHQ).

It belongs to the pseudouridine synthase TruB family. Type 2 subfamily.

The enzyme catalyses uridine(55) in tRNA = pseudouridine(55) in tRNA. In terms of biological role, could be responsible for synthesis of pseudouridine from uracil-55 in the psi GC loop of transfer RNAs. This is Probable tRNA pseudouridine synthase B from Thermoplasma acidophilum (strain ATCC 25905 / DSM 1728 / JCM 9062 / NBRC 15155 / AMRC-C165).